A 152-amino-acid chain; its full sequence is Large ribosomal subunit protein bL9 (152 aa).

The protein belongs to the bacterial ribosomal protein bL9 family.

Binds to the 23S rRNA. The sequence is that of Large ribosomal subunit protein bL9 from Microcystis aeruginosa (strain NIES-843 / IAM M-2473).